The following is an 872-amino-acid chain: uncharacterized protein (872 aa).

Residues L496–V524 adopt a coiled-coil conformation. 2 disordered regions span residues R595–Q736 and T844–V872. 2 stretches are compositionally biased toward polar residues: residues Q615–F659 and P670–V686. Low complexity predominate over residues Q687–Q736.

It localises to the virion. This is an uncharacterized protein from Acanthamoeba polyphaga mimivirus (APMV).